The sequence spans 185 residues: Peptidyl-tRNA hydrolase (185 aa).

F14 is a tRNA binding site. H19 serves as the catalytic Proton acceptor. Residues Y64, N66, and N112 each contribute to the tRNA site.

The protein belongs to the PTH family. Monomer.

The protein resides in the cytoplasm. The enzyme catalyses an N-acyl-L-alpha-aminoacyl-tRNA + H2O = an N-acyl-L-amino acid + a tRNA + H(+). Its function is as follows. Hydrolyzes ribosome-free peptidyl-tRNAs (with 1 or more amino acids incorporated), which drop off the ribosome during protein synthesis, or as a result of ribosome stalling. In terms of biological role, catalyzes the release of premature peptidyl moieties from peptidyl-tRNA molecules trapped in stalled 50S ribosomal subunits, and thus maintains levels of free tRNAs and 50S ribosomes. The protein is Peptidyl-tRNA hydrolase of Exiguobacterium sp. (strain ATCC BAA-1283 / AT1b).